A 509-amino-acid chain; its full sequence is Putative thymidine phosphorylase (509 aa).

This sequence belongs to the thymidine/pyrimidine-nucleoside phosphorylase family. Type 2 subfamily.

The enzyme catalyses thymidine + phosphate = 2-deoxy-alpha-D-ribose 1-phosphate + thymine. This Chelativorans sp. (strain BNC1) protein is Putative thymidine phosphorylase.